The sequence spans 1065 residues: Leucine-rich repeats and immunoglobulin-like domains protein 2 (1065 aa).

The N-terminal stretch at 1-40 (MAPAPLGVPEEQLLGCRSRVLSRLLFIAQTALLLLPAAGA) is a signal peptide. Positions 41-75 (GLCPAPCSCRIPLLDCSRRKLPAPSWRALSGLLPP) constitute an LRRNT domain. The Extracellular segment spans residues 41-807 (GLCPAPCSCR…HEDDGWTTVG (767 aa)). LRR repeat units lie at residues 76 to 97 (DTAILDFSHNRLSNWNISLESQ), 98 to 119 (TLQEVKMNYNELTEIPYFGEPT), 121 to 142 (NITLLSLVHNIIPEINAQALQF), 145 to 166 (ALESLDLSSNIISEIKTSSFPR), 168 to 189 (QLKYLNLSNNRITTLEAGCFDN), 193 to 214 (SLLVVKLNRNRMSMIPPKIFKL), 216 to 237 (HLQFLELKRNRIKIVEGLTFQG), 240 to 261 (SLRSLKMQRNGISKLKDGAFFG), 264 to 285 (NMEELELEHNNLTRVNKGWLYG), 288 to 309 (MLQQLYVSQNAIERISPDAWEF), 312 to 333 (RLSELDLSYNQLTRLDESAFVG), 336 to 357 (LLERLNLGDNRVTHIADGVFRF), 360 to 382 (NLQTLDLRNNEISWAIEDASEAF), 387 to 408 (SLTKLILQGNQIKSITKKAFIG), and 411 to 432 (SLEHLDLNNNAIMSIQENAFSQ). A glycan (N-linked (GlcNAc...) asparagine) is linked at N91. N-linked (GlcNAc...) asparagine glycosylation occurs at N121. N-linked (GlcNAc...) asparagine glycosylation is found at N173 and N189. N274 carries N-linked (GlcNAc...) asparagine glycosylation. Residues N441, N468, N514, N571, and N589 are each glycosylated (N-linked (GlcNAc...) asparagine). The 52-residue stretch at 443–494 (SSLLCDCHLKWLLQWLVDNNFQHSVNVSCAHPEWLAGQSILNVDLKDFVCDD) folds into the LRRCT domain. Ig-like C2-type domains lie at 498-597 (PQIR…AKLT), 602-691 (PSFL…ASLT), and 696-785 (PSFI…NVIS). A disulfide bridge connects residues C519 and C580. C623 and C675 are joined by a disulfide. N687 and N728 each carry an N-linked (GlcNAc...) asparagine glycan. The cysteines at positions 717 and 766 are disulfide-linked. A helical membrane pass occupies residues 808–828 (IVIIVVVCCVVGTSLIWVIVI). At 829 to 1065 (YHMRRKNEDY…RNIQDGSEGT (237 aa)) the chain is on the cytoplasmic side. The residue at position 906 (Y906) is a Phosphotyrosine. Disordered stretches follow at residues 963–990 (SANREPSAFPTNHERISEKKLPSTQMSG) and 1003–1040 (ELGLPHPPFSQQPVHESPQLHQNEGLAGREPDCSASSM). Residues 974–983 (NHERISEKKL) are compositionally biased toward basic and acidic residues. The span at 1013–1024 (QQPVHESPQLHQ) shows a compositional bias: polar residues.

Detected in all tissues analyzed.

It localises to the cell membrane. Its subcellular location is the cytoplasm. The chain is Leucine-rich repeats and immunoglobulin-like domains protein 2 (LRIG2) from Homo sapiens (Human).